A 481-amino-acid polypeptide reads, in one-letter code: UDP-N-acetylmuramoyl-L-alanyl-D-glutamate--L-lysine ligase (481 aa).

Residue serine 42 participates in UDP-N-acetyl-alpha-D-muramoyl-L-alanyl-D-glutamate binding. ATP is bound at residue 118 to 124 (GTKGKTT). UDP-N-acetyl-alpha-D-muramoyl-L-alanyl-D-glutamate-binding positions include asparagine 158, 160–161 (TT), serine 187, and arginine 195. At lysine 229 the chain carries N6-carboxylysine. Positions 404–407 (DDPN) match the L-lysine recognition motif motif.

This sequence belongs to the MurCDEF family. MurE subfamily. Carboxylation is probably crucial for Mg(2+) binding and, consequently, for the gamma-phosphate positioning of ATP.

It is found in the cytoplasm. The catalysed reaction is UDP-N-acetyl-alpha-D-muramoyl-L-alanyl-D-glutamate + L-lysine + ATP = UDP-N-acetyl-alpha-D-muramoyl-L-alanyl-gamma-D-glutamyl-L-lysine + ADP + phosphate + H(+). It participates in cell wall biogenesis; peptidoglycan biosynthesis. Functionally, catalyzes the addition of L-lysine to the nucleotide precursor UDP-N-acetylmuramoyl-L-alanyl-D-glutamate (UMAG) in the biosynthesis of bacterial cell-wall peptidoglycan. In Streptococcus thermophilus (strain ATCC BAA-491 / LMD-9), this protein is UDP-N-acetylmuramoyl-L-alanyl-D-glutamate--L-lysine ligase.